The following is a 1082-amino-acid chain: CRISPR-associated endonuclease Cas9 (1082 aa).

Aspartate 16 functions as the For RuvC-like nuclease domain in the catalytic mechanism. Aspartate 16, glutamate 504, and glutamate 508 together coordinate Mg(2+). The HNH Cas9-type domain occupies 512-667 (SFKDRKEIEK…DEDGFKERNL (156 aa)). Histidine 588 (proton acceptor for HNH nuclease domain) is an active-site residue. A Mg(2+)-binding site is contributed by histidine 723.

The protein belongs to the CRISPR-associated protein Cas9 family. Subtype II-C subfamily. As to quaternary structure, monomer. Binds crRNA and tracrRNA. Mg(2+) is required as a cofactor.

Its function is as follows. CRISPR (clustered regularly interspaced short palindromic repeat) is an adaptive immune system that provides protection against mobile genetic elements (viruses, transposable elements and conjugative plasmids). CRISPR clusters contain spacers, sequences complementary to antecedent mobile elements, and target invading nucleic acids. CRISPR clusters are transcribed and processed into CRISPR RNA (crRNA). In type II CRISPR systems correct processing of pre-crRNA requires a trans-encoded small RNA (tracrRNA), endogenous ribonuclease 3 (rnc) and this protein. The tracrRNA serves as a guide for ribonuclease 3-aided processing of pre-crRNA. Subsequently Cas9/crRNA/tracrRNA endonucleolytically cleaves linear or circular dsDNA target complementary to the spacer; Cas9 is inactive in the absence of the 2 guide RNAs (gRNA). Cas9 recognizes the protospacer adjacent motif (PAM) in the CRISPR repeat sequences to help distinguish self versus nonself, as targets within the bacterial CRISPR locus do not have PAMs. PAM recognition is also required for catalytic activity. Cuts target DNA in Cas9:gRNAs mixing experiments with C.jejuni strain NCTC 11168 and P.multocoda strain Pm70. The sequence is that of CRISPR-associated endonuclease Cas9 from Neisseria meningitidis serogroup A / serotype 4A (strain DSM 15465 / Z2491).